We begin with the raw amino-acid sequence, 148 residues long: Protoporphyrinogen IX oxidase (148 aa).

4 helical membrane-spanning segments follow: residues 7-27, 59-79, 86-106, and 128-148; these read YFLW…AALF, FIAS…LLIA, GGWL…HFYC, and FNEI…VKPF. His-15 lines the heme pocket. Residue Lys-92 coordinates heme.

Belongs to the HemJ family. Homodimer. It depends on heme b as a cofactor.

Its subcellular location is the cell membrane. It catalyses the reaction protoporphyrinogen IX + 3 A = protoporphyrin IX + 3 AH2. The protein operates within porphyrin-containing compound metabolism; protoporphyrin-IX biosynthesis; protoporphyrin-IX from protoporphyrinogen-IX: step 1/1. Catalyzes the oxidation of protoporphyrinogen IX to protoporphyrin IX. Is involved in the biosynthesis of tetrapyrrole molecules like heme. Does not use oxygen or artificial electron acceptors such as menadione or benzoquinone. The chain is Protoporphyrinogen IX oxidase from Helicobacter pylori (strain J99 / ATCC 700824) (Campylobacter pylori J99).